The primary structure comprises 155 residues: MSRRGTAEEKTAKSDPIYRNRLVNMLVNRILKHGKKALAYQIIYRAMKKIQQKTETNPLSVLRQAIRGVTPDIAVKARRVGGSTHQVPIEIGSTQGKALAIRWLLAASRKRPGRDMAFKLSSELVDAAKGSGDAIRKKEETHKMAEANRAFAHFR.

It belongs to the universal ribosomal protein uS7 family. In terms of assembly, part of the 30S ribosomal subunit.

It localises to the plastid. Its function is as follows. One of the primary rRNA binding proteins, it binds directly to 16S rRNA where it nucleates assembly of the head domain of the 30S subunit. This is Small ribosomal subunit protein uS7c (rps7) from Lathraea clandestina (Purple toothwort).